Consider the following 271-residue polypeptide: Secretagogin (271 aa).

EF-hand domains lie at 8 to 43 (LDAAEFLEIWQRFDADDNGYIEGKELDEFFCHLLKK), 53 to 88 (KVQGVKDRFMSAYDITADGRLQIQELANMILPEDEN), 100 to 135 (DNSVEFMRIWRKFDEDSSGFISAVELRNFLQDLFLQ), 144 to 179 (KLDEYTDTMMKLFNRNKDGRLDLNDLAKILALQENF), 192 to 227 (ERKSDFETIFAHYDVSKTGALEGPEVDGFVKDMMEL), and 235 to 271 (VDLDKFRQILLNHCDVNKDGKIQKSELALCLGLKANP). Ca(2+)-binding residues include Asp21, Asp23, Asn25, Tyr27, and Glu32. Ca(2+) contacts are provided by Asp113, Asp115, Ser117, Glu124, Asn159, Asp161, Arg163, Asp168, Asp205, Ser207, Thr209, Glu216, Asp249, Asn251, Asp253, Lys255, and Glu260.

The protein localises to the cytoplasm. This Xenopus laevis (African clawed frog) protein is Secretagogin (scgn).